We begin with the raw amino-acid sequence, 506 residues long: UDP-N-acetylmuramoyl-L-alanyl-D-glutamate--2,6-diaminopimelate ligase (506 aa).

Ser42 is a binding site for UDP-N-acetyl-alpha-D-muramoyl-L-alanyl-D-glutamate. 125–131 (GTSGKTT) serves as a coordination point for ATP. UDP-N-acetyl-alpha-D-muramoyl-L-alanyl-D-glutamate contacts are provided by residues 166 to 167 (TT), Ser193, and Arg201. An N6-carboxylysine modification is found at Lys233. Meso-2,6-diaminopimelate-binding positions include Arg395, 419 to 422 (DNPR), Gly475, and Glu479. The short motif at 419-422 (DNPR) is the Meso-diaminopimelate recognition motif element.

The protein belongs to the MurCDEF family. MurE subfamily. Mg(2+) serves as cofactor. Carboxylation is probably crucial for Mg(2+) binding and, consequently, for the gamma-phosphate positioning of ATP.

It is found in the cytoplasm. The enzyme catalyses UDP-N-acetyl-alpha-D-muramoyl-L-alanyl-D-glutamate + meso-2,6-diaminopimelate + ATP = UDP-N-acetyl-alpha-D-muramoyl-L-alanyl-gamma-D-glutamyl-meso-2,6-diaminopimelate + ADP + phosphate + H(+). It participates in cell wall biogenesis; peptidoglycan biosynthesis. Functionally, catalyzes the addition of meso-diaminopimelic acid to the nucleotide precursor UDP-N-acetylmuramoyl-L-alanyl-D-glutamate (UMAG) in the biosynthesis of bacterial cell-wall peptidoglycan. The chain is UDP-N-acetylmuramoyl-L-alanyl-D-glutamate--2,6-diaminopimelate ligase from Streptomyces avermitilis (strain ATCC 31267 / DSM 46492 / JCM 5070 / NBRC 14893 / NCIMB 12804 / NRRL 8165 / MA-4680).